A 151-amino-acid chain; its full sequence is Cytochrome c-type biogenesis protein CcmE (151 aa).

Topologically, residues 1–8 (MNPLRKKR) are cytoplasmic. Residues 9-29 (LLIILAILVGVGIAVGLALSA) traverse the membrane as a helical; Signal-anchor for type II membrane protein segment. Over 30–151 (LKENINLFYT…QSAPTPAKEG (122 aa)) the chain is Periplasmic. Heme contacts are provided by His124 and Tyr128. The interval 131-151 (PEVTKALKDSGQSAPTPAKEG) is disordered.

The protein belongs to the CcmE/CycJ family.

It is found in the cell inner membrane. In terms of biological role, heme chaperone required for the biogenesis of c-type cytochromes. Transiently binds heme delivered by CcmC and transfers the heme to apo-cytochromes in a process facilitated by CcmF and CcmH. This Pseudomonas fluorescens (strain ATCC BAA-477 / NRRL B-23932 / Pf-5) protein is Cytochrome c-type biogenesis protein CcmE.